The following is a 346-amino-acid chain: Phosphoribosylformylglycinamidine cyclo-ligase (346 aa).

This sequence belongs to the AIR synthase family.

The protein localises to the cytoplasm. The enzyme catalyses 2-formamido-N(1)-(5-O-phospho-beta-D-ribosyl)acetamidine + ATP = 5-amino-1-(5-phospho-beta-D-ribosyl)imidazole + ADP + phosphate + H(+). The protein operates within purine metabolism; IMP biosynthesis via de novo pathway; 5-amino-1-(5-phospho-D-ribosyl)imidazole from N(2)-formyl-N(1)-(5-phospho-D-ribosyl)glycinamide: step 2/2. This chain is Phosphoribosylformylglycinamidine cyclo-ligase, found in Photorhabdus laumondii subsp. laumondii (strain DSM 15139 / CIP 105565 / TT01) (Photorhabdus luminescens subsp. laumondii).